Consider the following 486-residue polypeptide: Ribosomal RNA small subunit methyltransferase F (486 aa).

S-adenosyl-L-methionine-binding positions include 124–130, glutamate 148, aspartate 175, and aspartate 193; that span reads ASAPGSK. The Nucleophile role is filled by cysteine 246.

The protein belongs to the class I-like SAM-binding methyltransferase superfamily. RsmB/NOP family.

Its subcellular location is the cytoplasm. The catalysed reaction is cytidine(1407) in 16S rRNA + S-adenosyl-L-methionine = 5-methylcytidine(1407) in 16S rRNA + S-adenosyl-L-homocysteine + H(+). In terms of biological role, specifically methylates the cytosine at position 1407 (m5C1407) of 16S rRNA. The sequence is that of Ribosomal RNA small subunit methyltransferase F from Shewanella baltica (strain OS195).